The following is a 462-amino-acid chain: MFTKRKEKIHFIGIGGIGMSAIASVLNAIGFTITGSDLAKTAKTESLESSGIKVYYGHKAQNIEDDVTAVVTSSAISPTNEEIIEAKSKKITVISRGEMLAELMRLRYGIAISGSHGKTTTTSLISQIMMHAGLNPVCIIGGNHFNLKSNAACNDLSSEYMVCEADESDGSFLRLSPVINVVTNIDNDHLDYYGNVEALRVAFLEFINKVPFYGCSFLCFEDNVVKDLSKSANKKYYSYGFSKDYDFYVDRDSIRVEAPITYFTAYHNSECLGEFSVPLIGIHNVLNSLASIGVGIHLGIDIADIKEGLKTFEGVGRRLNKLYDKEITLFDDYAHHPTEIKATLSSVRNAYKNRRIIAVFQPHRYSRTELLLNDFEYAFNDADEVIISDIYAAGESPIPGISGEIICDVVRKQNNHVRYIPNIEDVLPVLDDIKKDGDIILTLGAGNIVRISNEYARKLQNG.

114 to 120 (GSHGKTT) is an ATP binding site.

It belongs to the MurCDEF family.

Its subcellular location is the cytoplasm. It carries out the reaction UDP-N-acetyl-alpha-D-muramate + L-alanine + ATP = UDP-N-acetyl-alpha-D-muramoyl-L-alanine + ADP + phosphate + H(+). Its pathway is cell wall biogenesis; peptidoglycan biosynthesis. Cell wall formation. The chain is UDP-N-acetylmuramate--L-alanine ligase from Brachyspira hyodysenteriae (strain ATCC 49526 / WA1).